Here is a 376-residue protein sequence, read N- to C-terminus: Glutamate 5-kinase (376 aa).

Residue lysine 15 coordinates ATP. Substrate-binding residues include serine 56, aspartate 143, and asparagine 155. ATP is bound at residue 175-176; it reads SD. A PUA domain is found at 281 to 358; sequence KGTLTIDAGA…PDVMMILGIS (78 aa).

It belongs to the glutamate 5-kinase family.

The protein localises to the cytoplasm. The enzyme catalyses L-glutamate + ATP = L-glutamyl 5-phosphate + ADP. Its pathway is amino-acid biosynthesis; L-proline biosynthesis; L-glutamate 5-semialdehyde from L-glutamate: step 1/2. Its function is as follows. Catalyzes the transfer of a phosphate group to glutamate to form L-glutamate 5-phosphate. The sequence is that of Glutamate 5-kinase from Rhodopseudomonas palustris (strain BisB5).